Here is a 118-residue protein sequence, read N- to C-terminus: Putative pterin-4-alpha-carbinolamine dehydratase (118 aa).

The protein belongs to the pterin-4-alpha-carbinolamine dehydratase family.

It catalyses the reaction (4aS,6R)-4a-hydroxy-L-erythro-5,6,7,8-tetrahydrobiopterin = (6R)-L-erythro-6,7-dihydrobiopterin + H2O. This Pseudomonas paraeruginosa (strain DSM 24068 / PA7) (Pseudomonas aeruginosa (strain PA7)) protein is Putative pterin-4-alpha-carbinolamine dehydratase.